Here is a 189-residue protein sequence, read N- to C-terminus: Protein GrpE (189 aa).

Residues 1-31 (MSKKHMKGNGGEVPENSEMSGSEELVAVEPG) are disordered.

The protein belongs to the GrpE family. In terms of assembly, homodimer.

Its subcellular location is the cytoplasm. Participates actively in the response to hyperosmotic and heat shock by preventing the aggregation of stress-denatured proteins, in association with DnaK and GrpE. It is the nucleotide exchange factor for DnaK and may function as a thermosensor. Unfolded proteins bind initially to DnaJ; upon interaction with the DnaJ-bound protein, DnaK hydrolyzes its bound ATP, resulting in the formation of a stable complex. GrpE releases ADP from DnaK; ATP binding to DnaK triggers the release of the substrate protein, thus completing the reaction cycle. Several rounds of ATP-dependent interactions between DnaJ, DnaK and GrpE are required for fully efficient folding. The sequence is that of Protein GrpE from Syntrophobacter fumaroxidans (strain DSM 10017 / MPOB).